The following is a 317-amino-acid chain: Phospho-N-acetylmuramoyl-pentapeptide-transferase (317 aa).

9 consecutive transmembrane segments (helical) span residues 4–24, 49–69, 76–96, 112–132, 147–167, 186–206, 223–243, 246–266, and 297–317; these read LIYS…ILIP, TPTM…AVIV, AMIA…DDTL, MILL…NPYI, LGVF…NAVN, FLAL…CAIL, IFMG…VAMI, LPLL…SVIF, and RVVS…FLSL.

The protein belongs to the glycosyltransferase 4 family. MraY subfamily. The cofactor is Mg(2+).

Its subcellular location is the cell membrane. The enzyme catalyses UDP-N-acetyl-alpha-D-muramoyl-L-alanyl-gamma-D-glutamyl-meso-2,6-diaminopimeloyl-D-alanyl-D-alanine + di-trans,octa-cis-undecaprenyl phosphate = di-trans,octa-cis-undecaprenyl diphospho-N-acetyl-alpha-D-muramoyl-L-alanyl-D-glutamyl-meso-2,6-diaminopimeloyl-D-alanyl-D-alanine + UMP. Its pathway is cell wall biogenesis; peptidoglycan biosynthesis. Catalyzes the initial step of the lipid cycle reactions in the biosynthesis of the cell wall peptidoglycan: transfers peptidoglycan precursor phospho-MurNAc-pentapeptide from UDP-MurNAc-pentapeptide onto the lipid carrier undecaprenyl phosphate, yielding undecaprenyl-pyrophosphoryl-MurNAc-pentapeptide, known as lipid I. The chain is Phospho-N-acetylmuramoyl-pentapeptide-transferase from Clostridium kluyveri (strain NBRC 12016).